Reading from the N-terminus, the 274-residue chain is Triosephosphate isomerase (274 aa).

31–33 is a binding site for substrate; the sequence is NWK. H118 (electrophile) is an active-site residue. E188 acts as the Proton acceptor in catalysis. Substrate is bound by residues G194, S234, and 255–256; that span reads GG.

This sequence belongs to the triosephosphate isomerase family. In terms of assembly, homodimer.

Its subcellular location is the cytoplasm. The catalysed reaction is D-glyceraldehyde 3-phosphate = dihydroxyacetone phosphate. Its pathway is carbohydrate biosynthesis; gluconeogenesis. It participates in carbohydrate degradation; glycolysis; D-glyceraldehyde 3-phosphate from glycerone phosphate: step 1/1. In terms of biological role, involved in the gluconeogenesis. Catalyzes stereospecifically the conversion of dihydroxyacetone phosphate (DHAP) to D-glyceraldehyde-3-phosphate (G3P). This Chlamydia trachomatis serovar D (strain ATCC VR-885 / DSM 19411 / UW-3/Cx) protein is Triosephosphate isomerase.